A 743-amino-acid chain; its full sequence is MEAAAVTVTRSATRRRRRQLQGLAAPEAGTQEEQEDQEPRPRRRRPGRSIKDEEEETVFREVVSFSPDPLPVRYYDKDTTKPISFYLSSLEELLAWKPRLEDGFNVALEPLACRQPPLSSQRPRTLLCHDMMGGYLDDRFIQGSVVQTPYAFYHWQCIDVFVYFSHHTVTIPPVGWTNTAHRHGVCVLGTFITEWNEGGRLCEAFLAGDERSYQAVADRLVQITQFFRFDGWLINIENSLSLAAVGNMPPFLRYLTTQLHRQVPGGLVLWYDSVVQSGQLKWQDELNQHNRVFFDSCDGFFTNYNWREEHLERMLGQAGERRADVYVGVDVFARGNVVGGRFDTDKSLELIRKHGFSVALFAPGWVYECLEKKDFFQNQDKFWGRLERYLPTHSICSLPFVTSFCLGMGARRVCYGQEEAVGPWYHLSAQEIQPLFGEHRLGGDGRGWVRTHCCLEDAWHGGSSLLVRGVIPPEVGNVAVRLFSLQAPVPPKIYLSMVYKLEGPTDVTVALELTTGDAGSCHIGGISVLNAETSSRHSLRPLRVPPTKLARWVGRCGRQLSGGWVQHCYEVSLRGCLLLDLLVCFSRPPGSREEESFTCRLGEIQVVDAASLLAPLPQVQAVTISHIRWQPSASEREGPPALLQLSCTLHWSFLLSQVRCFRIHCWGGMSDDSPGRELPRPEMPMFLGLAFATQYRIVDLLVEAAGPGQDRRMEFLVEPVPKEGFRVPQAEWGRAVLLYSAPA.

Methionine 1 bears the N-acetylmethionine mark. A compositionally biased stretch (low complexity) spans 1 to 11; that stretch reads MEAAAVTVTRS. The tract at residues 1-55 is disordered; sequence MEAAAVTVTRSATRRRRRQLQGLAAPEAGTQEEQEDQEPRPRRRRPGRSIKDEEE. Phosphoserine is present on serine 66. The BRCT domain occupies 291-383; that stretch reads RVFFDSCDGF…DFFQNQDKFW (93 aa).

Belongs to the glycosyl hydrolase 85 family. Widely expressed. Expressed at higher level in thymus and spleen.

It is found in the cytoplasm. Its subcellular location is the cytosol. The enzyme catalyses an N(4)-(oligosaccharide-(1-&gt;3)-[oligosaccharide-(1-&gt;6)]-beta-D-Man-(1-&gt;4)-beta-D-GlcNAc-(1-&gt;4)-alpha-D-GlcNAc)-L-asparaginyl-[protein] + H2O = an oligosaccharide-(1-&gt;3)-[oligosaccharide-(1-&gt;6)]-beta-D-Man-(1-&gt;4)-D-GlcNAc + N(4)-(N-acetyl-beta-D-glucosaminyl)-L-asparaginyl-[protein]. Its function is as follows. Endoglycosidase that releases N-glycans from glycoproteins by cleaving the beta-1,4-glycosidic bond in the N,N'-diacetylchitobiose core. Involved in the processing of free oligosaccharides in the cytosol. In Homo sapiens (Human), this protein is Cytosolic endo-beta-N-acetylglucosaminidase (ENGASE).